A 556-amino-acid chain; its full sequence is CDP-diacylglycerol--glycerol-3-phosphate 3-phosphatidyltransferase, mitochondrial (556 aa).

Residues 1-28 constitute a mitochondrion transit peptide; the sequence is MAVAAAAAAGPVFWRRLLGLLPGRPGLA. Ser-49 carries the post-translational modification Phosphoserine. 124–131 serves as a coordination point for ATP; sequence ASLYLGTG. PLD phosphodiesterase domains follow at residues 215–241 and 460–493; these read TIGL…SDSY and RGWT…GYRS. Catalysis depends on residues His-220, Lys-222, and Asp-227.

This sequence belongs to the CDP-alcohol phosphatidyltransferase class-II family.

It localises to the mitochondrion. The enzyme catalyses a CDP-1,2-diacyl-sn-glycerol + sn-glycerol 3-phosphate = a 1,2-diacyl-sn-glycero-3-phospho-(1'-sn-glycero-3'-phosphate) + CMP + H(+). It functions in the pathway phospholipid metabolism; phosphatidylglycerol biosynthesis; phosphatidylglycerol from CDP-diacylglycerol: step 1/2. Its activity is regulated as follows. Activated by calcium and magnesium and inhibited by other bivalent cations. In terms of biological role, functions in the biosynthesis of the anionic phospholipids phosphatidylglycerol and cardiolipin. The sequence is that of CDP-diacylglycerol--glycerol-3-phosphate 3-phosphatidyltransferase, mitochondrial (PGS1) from Pongo abelii (Sumatran orangutan).